The sequence spans 247 residues: tRNA uridine(34) hydroxylase (247 aa).

The Rhodanese domain occupies 124 to 218 (TQQDVIVIDT…YLEDTQNKNN (95 aa)). The active-site Cysteine persulfide intermediate is the Cys-178.

Belongs to the TrhO family.

The catalysed reaction is uridine(34) in tRNA + AH2 + O2 = 5-hydroxyuridine(34) in tRNA + A + H2O. In terms of biological role, catalyzes oxygen-dependent 5-hydroxyuridine (ho5U) modification at position 34 in tRNAs. The polypeptide is tRNA uridine(34) hydroxylase (Rickettsia conorii (strain ATCC VR-613 / Malish 7)).